A 456-amino-acid polypeptide reads, in one-letter code: MEKLWGGRFQGKSEAWIDDFGASISFDQKMAKEDLAGSLAHVAMLGKCGIIPASEAAEITAGLKILQEKLAFGELEFSTVNEDIHLNIEKLLHEEIGSVAGKLHTARSRNDQVATDMHLYLKQAVAEIIQSLKHLRVVLVQKAELHVETIMPGYTHLQHAQPLSFAHHLLAYFGMFTRDLERLEESVKRIDISPLGSAALAGTTFPIDRAYSAELLGFSAVYENSLDGVSDRDFIIEFLSNSSILMMHLSRFCEELILWTSHEFQFVELTDAFSTGSSIMPQKKNPDMAELIRGKTGRVYGNLFGMLTVLKGLPLAYNKDLQEDKEGMFDTLETVQTSLDIFAGMIETMKVNTEIMEESTQKDFSNATELADYLAKKGVPFREAHEIVGKLVLECTQNGIYLQDVALSHYQEINPLIEEDIYVVLSSKTAVQKRNSYGGTGFDQIKVALENAKKTL.

The protein belongs to the lyase 1 family. Argininosuccinate lyase subfamily.

The protein resides in the cytoplasm. The catalysed reaction is 2-(N(omega)-L-arginino)succinate = fumarate + L-arginine. Its pathway is amino-acid biosynthesis; L-arginine biosynthesis; L-arginine from L-ornithine and carbamoyl phosphate: step 3/3. In Listeria monocytogenes serovar 1/2a (strain ATCC BAA-679 / EGD-e), this protein is Argininosuccinate lyase.